A 64-amino-acid chain; its full sequence is Large ribosomal subunit protein bL28 (64 aa).

The segment at 1–23 (MARKDQISHRGPLSGNNRSHALN) is disordered.

The protein belongs to the bacterial ribosomal protein bL28 family.

This Mesomycoplasma hyopneumoniae (strain 232) (Mycoplasma hyopneumoniae) protein is Large ribosomal subunit protein bL28.